We begin with the raw amino-acid sequence, 225 residues long: Ribulose-phosphate 3-epimerase (225 aa).

Serine 9 is a binding site for substrate. The a divalent metal cation site is built by histidine 34, aspartate 36, and histidine 68. Residue aspartate 36 is the Proton acceptor of the active site. Residues histidine 68, 144 to 147 (GFGG), 177 to 179 (DGG), and 199 to 200 (GS) contribute to the substrate site. Aspartate 177 is an a divalent metal cation binding site. Aspartate 177 functions as the Proton donor in the catalytic mechanism.

It belongs to the ribulose-phosphate 3-epimerase family. It depends on a divalent metal cation as a cofactor.

It catalyses the reaction D-ribulose 5-phosphate = D-xylulose 5-phosphate. Its pathway is carbohydrate degradation. Functionally, catalyzes the reversible epimerization of D-ribulose 5-phosphate to D-xylulose 5-phosphate. The polypeptide is Ribulose-phosphate 3-epimerase (Escherichia coli O157:H7).